The chain runs to 279 residues: MQNHVISLASAAERRAHITDTFGVRGIPFQFFDALMPSERLEQAMAELVPGLSAHPYLSGVEKACFMSHAVLWKQALDEGLPYIAVFEDDVLLGEGAEKFLAEDAWLQERFDPDSAFIVRLETMFMHVLTSPSGVADYCGRAFPLLESEHWGTAGYIISRKAMWFFLDRFAALPSEGLHPVDWMMFGNPDDRERMPVCQLNPALCAQELHYAKFHDQNSALGSLIEHDRCLNSKQQRRDSPANTFKHRLIRALTKISREREKRRQRREQLIGKIIVPFQ.

It belongs to the glycosyltransferase 25 family.

Its pathway is glycan metabolism; lacto-N-neotetraose biosynthesis. It functions in the pathway bacterial outer membrane biogenesis; lipooligosaccharide biosynthesis. Functionally, adds the second galactose to the lacto-N-tetraose chain in lipooligosaccharide (LOS). This is Lacto-N-neotetraose biosynthesis glycosyltransferase LgtB (lgtB) from Neisseria meningitidis serogroup A / serotype 4A (strain DSM 15465 / Z2491).